The sequence spans 894 residues: Mitogen-activated protein kinase kinase kinase kinase 3 (894 aa).

N-acetylmethionine is present on M1. The Protein kinase domain occupies 16–273; it reads FELIQRIGSG…AEKLLQHPFV (258 aa). Residues 22–30, K45, and K48 contribute to the ATP site; that span reads IGSGTYGDV. Catalysis depends on D136, which acts as the Proton acceptor. Residues S329 and S398 each carry the phosphoserine modification. The interval 410-536 is disordered; sequence AHLEDDEGDD…DVPKPISNGL (127 aa). Positions 473 to 487 are enriched in pro residues; the sequence is QVPPRPPPPRLPPHK. The segment covering 513 to 529 has biased composition (basic and acidic residues); the sequence is NEHRGTNLSRKEKKDVP. Positions 556–867 constitute a CNH domain; the sequence is PLKIHCASSW…IFRLLGSDRV (312 aa).

The protein belongs to the protein kinase superfamily. STE Ser/Thr protein kinase family. STE20 subfamily. As to quaternary structure, interacts with SH3GL2. Interaction appears to regulate MAP4K3-mediated JNK activation. It depends on Mg(2+) as a cofactor. As to expression, ubiquitously expressed in all tissues examined, with high levels in heart, brain, placenta, skeletal muscle, kidney and pancreas and lower levels in lung and liver.

The catalysed reaction is L-seryl-[protein] + ATP = O-phospho-L-seryl-[protein] + ADP + H(+). It catalyses the reaction L-threonyl-[protein] + ATP = O-phospho-L-threonyl-[protein] + ADP + H(+). In terms of biological role, serine/threonine kinase that plays a role in the response to environmental stress. Appears to act upstream of the JUN N-terminal pathway. Activator of the Hippo signaling pathway which plays a pivotal role in organ size control and tumor suppression by restricting proliferation and promoting apoptosis. MAP4Ks act in parallel to and are partially redundant with STK3/MST2 and STK4/MST2 in the phosphorylation and activation of LATS1/2, and establish MAP4Ks as components of the expanded Hippo pathway. The chain is Mitogen-activated protein kinase kinase kinase kinase 3 from Homo sapiens (Human).